The following is a 106-amino-acid chain: Large ribosomal subunit protein bL21 (106 aa).

It belongs to the bacterial ribosomal protein bL21 family. As to quaternary structure, part of the 50S ribosomal subunit. Contacts protein L20.

Functionally, this protein binds to 23S rRNA in the presence of protein L20. The chain is Large ribosomal subunit protein bL21 from Thermosipho africanus (strain TCF52B).